We begin with the raw amino-acid sequence, 335 residues long: UPF0324 membrane protein gbs1193 (335 aa).

The next 9 helical transmembrane spans lie at 20–42, 57–79, 84–106, 116–138, 151–173, 210–232, 253–275, 285–304, and 311–333; these read SWLL…IGII, IAFT…LNLM, VGIS…AYVL, IATL…TAPV, SVIF…FIGL, GATI…LSIY, VLYF…SLRI, FFIV…SKLI, and ILLG…AILG.

This sequence belongs to the UPF0324 family.

Its subcellular location is the cell membrane. The chain is UPF0324 membrane protein gbs1193 from Streptococcus agalactiae serotype III (strain NEM316).